The following is a 427-amino-acid chain: UPF0415 protein C7orf25 homolog (427 aa).

Residues 200–234 (GGEEEDEEDQEGDHEDLVEEEEDGEDDNDDDSDDT) show a composition bias toward acidic residues. The interval 200 to 236 (GGEEEDEEDQEGDHEDLVEEEEDGEDDNDDDSDDTDL) is disordered.

It belongs to the UPF0415 family.

The chain is UPF0415 protein C7orf25 homolog from Danio rerio (Zebrafish).